A 209-amino-acid chain; its full sequence is Small ribosomal subunit protein uS3 (209 aa).

Residues 17-86 form the KH type-2 domain; the sequence is IDEYLEKELR…NPQIEVEEIK (70 aa).

It belongs to the universal ribosomal protein uS3 family. Part of the 30S ribosomal subunit.

Its function is as follows. Binds the lower part of the 30S subunit head. The chain is Small ribosomal subunit protein uS3 from Thermococcus gammatolerans (strain DSM 15229 / JCM 11827 / EJ3).